Here is a 373-residue protein sequence, read N- to C-terminus: P2Y purinoceptor 1 (373 aa).

Topologically, residues 1–51 (MTEVLWPAVPNGTDTAFLADPGSPWGNSTVTSTAAVASPFKCALTKTGFQF) are extracellular. 2 N-linked (GlcNAc...) asparagine glycosylation sites follow: asparagine 11 and asparagine 27. 2 disulfide bridges follow: cysteine 42/cysteine 296 and cysteine 124/cysteine 202. Lysine 46 contributes to the ADP binding site. A helical transmembrane segment spans residues 52–74 (YYLPAVYILVFIIGFLGNSVAIW). Topologically, residues 75-87 (MFVFHMKPWSGIS) are cytoplasmic. A helical transmembrane segment spans residues 88–109 (VYMFNLALADFLYVLTLPALIF). The Extracellular segment spans residues 110-125 (YYFNKTDWIFGDAMCK). Asparagine 113 carries N-linked (GlcNAc...) asparagine glycosylation. A helical transmembrane segment spans residues 126–147 (LQRFIFHVNLYGSILFLTCISA). Topologically, residues 148–166 (HRYSGVVYPLKSLGRLKKK) are cytoplasmic. Residues 167 to 188 (NAVYISVLVWLIVVVGISPILF) traverse the membrane as a helical segment. The Extracellular portion of the chain corresponds to 189–214 (YSGTGIRKNKTITCYDTTSDEYLRSY). N-linked (GlcNAc...) asparagine glycosylation occurs at asparagine 197. 203-205 (YDT) lines the ADP pocket. The chain crosses the membrane as a helical span at residues 215 to 237 (FIYSMCTTVAMFCVPLVLILGCY). The Cytoplasmic segment spans residues 238–260 (GLIVRALIYKDLDNSPLRRKSIY). Residues 261-284 (LVIIVLTVFAVSYIPFHVMKTMNL) form a helical membrane-spanning segment. ADP is bound by residues 283–287 (NLRAR), 303–306 (YATY), and arginine 310. Topologically, residues 285–303 (RARLDFQTPEMCAFNDRVY) are extracellular. The helical transmembrane segment at 304–325 (ATYQVTRGLASLNSCVDPILYF) threads the bilayer. At 326 to 373 (LAGDTFRRRLSRATRKASRRSEANLQSKSEDMTLNILSEFKQNGDTSL) the chain is on the cytoplasmic side.

The protein belongs to the G-protein coupled receptor 1 family.

It is found in the cell membrane. Receptor for extracellular adenine nucleotides such as ADP. In platelets, binding to ADP leads to mobilization of intracellular calcium ions via activation of phospholipase C, a change in platelet shape, and ultimately platelet aggregation. This chain is P2Y purinoceptor 1 (P2RY1), found in Bos taurus (Bovine).